Here is a 214-residue protein sequence, read N- to C-terminus: Probable GTP-binding protein EngB (214 aa).

Residues 24-199 enclose the EngB-type G domain; the sequence is GGYEVAFAGR…RGIVGGWLGL (176 aa). GTP-binding positions include 32–39, 59–63, 77–80, 144–147, and 178–180; these read GRSNAGKS, GRTQQ, DLPG, TKAD, and YSG. Mg(2+) is bound by residues Ser39 and Thr61.

Belongs to the TRAFAC class TrmE-Era-EngA-EngB-Septin-like GTPase superfamily. EngB GTPase family. Requires Mg(2+) as cofactor.

Necessary for normal cell division and for the maintenance of normal septation. This chain is Probable GTP-binding protein EngB, found in Xanthomonas axonopodis pv. citri (strain 306).